Reading from the N-terminus, the 142-residue chain is Deoxyuridine 5'-triphosphate nucleotidohydrolase (142 aa).

Substrate is bound by residues 62-64, Asn-75, and 79-81; these read RSG and TID.

The protein belongs to the dUTPase family. Requires Mg(2+) as cofactor.

The catalysed reaction is dUTP + H2O = dUMP + diphosphate + H(+). Its pathway is pyrimidine metabolism; dUMP biosynthesis; dUMP from dCTP (dUTP route): step 2/2. Its function is as follows. This enzyme is involved in nucleotide metabolism: it produces dUMP, the immediate precursor of thymidine nucleotides and it decreases the intracellular concentration of dUTP so that uracil cannot be incorporated into DNA. This Clostridium novyi (strain NT) protein is Deoxyuridine 5'-triphosphate nucleotidohydrolase.